The sequence spans 470 residues: Cysteine--tRNA ligase (470 aa).

Residue Cys27 coordinates Zn(2+). A 'HIGH' region motif is present at residues 29–39 (PTVYNHIHIGN). Residues Cys207, His232, and Glu236 each coordinate Zn(2+). The 'KMSKS' region motif lies at 265 to 269 (KMAKS). ATP is bound at residue Lys268.

It belongs to the class-I aminoacyl-tRNA synthetase family. As to quaternary structure, monomer. Zn(2+) serves as cofactor.

Its subcellular location is the cytoplasm. It carries out the reaction tRNA(Cys) + L-cysteine + ATP = L-cysteinyl-tRNA(Cys) + AMP + diphosphate. The chain is Cysteine--tRNA ligase from Rubrobacter xylanophilus (strain DSM 9941 / JCM 11954 / NBRC 16129 / PRD-1).